The following is a 74-amino-acid chain: MLLQAFIFLLAGFAAKISALMTNETSDRPLVHFTPNKGWMNDPNGLWYDAKEGKWHLYFQYNPNDTVWGLPLFW.

The first 19 residues, 1–19, serve as a signal peptide directing secretion; that stretch reads MLLQAFIFLLAGFAAKISA. Asn-23 carries an N-linked (GlcNAc...) asparagine glycan. Substrate-binding positions include 39-42 and Gln-60; that span reads WMND. Residue Asp-42 is part of the active site. A glycan (N-linked (GlcNAc...) asparagine) is linked at Asn-64.

Belongs to the glycosyl hydrolase 32 family.

It carries out the reaction Hydrolysis of terminal non-reducing beta-D-fructofuranoside residues in beta-D-fructofuranosides.. In Saccharomyces cerevisiae (Baker's yeast), this protein is Invertase 3 (SUC3).